Consider the following 218-residue polypeptide: Ribose-5-phosphate isomerase A (218 aa).

Substrate-binding positions include 28 to 31, 81 to 84, and 94 to 97; these read TGST, DGAD, and KGGG. Catalysis depends on glutamate 103, which acts as the Proton acceptor. Lysine 121 is a substrate binding site.

It belongs to the ribose 5-phosphate isomerase family. Homodimer.

It carries out the reaction aldehydo-D-ribose 5-phosphate = D-ribulose 5-phosphate. It functions in the pathway carbohydrate degradation; pentose phosphate pathway; D-ribose 5-phosphate from D-ribulose 5-phosphate (non-oxidative stage): step 1/1. Functionally, catalyzes the reversible conversion of ribose-5-phosphate to ribulose 5-phosphate. This Proteus mirabilis (strain HI4320) protein is Ribose-5-phosphate isomerase A.